The primary structure comprises 285 residues: Eukaryotic translation initiation factor 3 subunit F-2 (285 aa).

The region spanning 11–145 is the MPN domain; that stretch reads VFLKPLVLFQ…TRLYCAVEMG (135 aa).

This sequence belongs to the eIF-3 subunit F family. As to quaternary structure, component of the eukaryotic translation initiation factor 3 (eIF-3) complex. The eIF-3 complex interacts with pix.

It localises to the cytoplasm. Its function is as follows. Component of the eukaryotic translation initiation factor 3 (eIF-3) complex, which is involved in protein synthesis of a specialized repertoire of mRNAs and, together with other initiation factors, stimulates binding of mRNA and methionyl-tRNAi to the 40S ribosome. The eIF-3 complex specifically targets and initiates translation of a subset of mRNAs involved in cell proliferation. The polypeptide is Eukaryotic translation initiation factor 3 subunit F-2 (Drosophila simulans (Fruit fly)).